Reading from the N-terminus, the 1043-residue chain is tRNA wybutosine-synthesizing protein 2/3/4 (1043 aa).

The segment at 1 to 233 (MEFDRRKAAA…PVLQNGAKHG (233 aa)) is tRNA wybutosine-synthesizing protein 3 homolog. A disordered region spans residues 53-75 (RVSVLAQPPPPQQADPGGAKTKK). Kelch repeat units lie at residues 360 to 410 (DIYV…AVDR), 412 to 460 (VYVF…SYGS), 461 to 510 (KLFL…IYKD), and 512 to 559 (LGIL…VIID). The interval 700–1041 (QPDDSCVFEE…RHLVVDVKCR (342 aa)) is tRNA wybutosine-synthesizing protein 2 homolog. S-adenosyl-L-methionine is bound by residues Lys874 and 942–943 (DN).

The protein in the C-terminal section; belongs to the class I-like SAM-binding methyltransferase superfamily. TRM5/TYW2 family. This sequence in the N-terminal section; belongs to the TYW3 family.

It catalyses the reaction 4-demethyl-7-[(3S)-3-amino-3-carboxypropyl]wyosine(37) in tRNA(Phe) + S-adenosyl-L-methionine = 7-[(3S)-3-amino-3-carboxypropyl]wyosine(37) in tRNA(Phe) + S-adenosyl-L-homocysteine + H(+). The enzyme catalyses 4-demethylwyosine(37) in tRNA(Phe) + S-adenosyl-L-methionine = 4-demethyl-7-[(3S)-3-amino-3-carboxypropyl]wyosine(37) in tRNA(Phe) + S-methyl-5'-thioadenosine + H(+). It participates in tRNA modification; wybutosine-tRNA(Phe) biosynthesis. Its function is as follows. S-adenosyl-L-methionine-dependent transferase that acts as a component of the wybutosine biosynthesis pathway. Wybutosine is a hyper modified guanosine with a tricyclic base found at the 3'-position adjacent to the anticodon of eukaryotic phenylalanine tRNA. This is tRNA wybutosine-synthesizing protein 2/3/4 from Oryza sativa subsp. japonica (Rice).